Reading from the N-terminus, the 541-residue chain is 2-hydroxyacylsphingosine 1-beta-galactosyltransferase (541 aa).

A signal peptide spans 1–20 (MKSYTPYFILLWSAVGIAKA). N-linked (GlcNAc...) asparagine glycosylation is found at Asn78, Asn333, and Asn442. Residues 472–492 (YFLLDIAFVLLLGAALLYFLL) form a helical membrane-spanning segment.

The protein belongs to the UDP-glycosyltransferase family.

It localises to the membrane. The protein localises to the endoplasmic reticulum. The catalysed reaction is an N-acylsphing-4-enine + UDP-alpha-D-galactose = a beta-D-galactosyl-(1&lt;-&gt;1')-N-acylsphing-4-enine + UDP + H(+). It carries out the reaction an N-acyl-sphingoid base + UDP-alpha-D-galactose = a D-galactosylceramide + UDP + H(+). It catalyses the reaction N-(2-hydroxy-hexanoyl)-sphing-4-enine + UDP-alpha-D-galactose = N-(2-hydroxy-hexanoyl)-beta-D-galactosyl-sphing-4-enine + UDP + H(+). The enzyme catalyses N-(2-hydroxy-hexanoyl)-sphinganine + UDP-alpha-D-galactose = N-(2-hydroxyhexanoyl)-beta-D-galactosylsphinganine + UDP + H(+). The protein operates within sphingolipid metabolism; galactosylceramide biosynthesis. In terms of biological role, catalyzes the transfer of galactose to ceramide, a key enzymatic step in the biosynthesis of galactocerebrosides, which are abundant sphingolipids of the myelin membrane of the central nervous system and peripheral nervous system. Galactosylates both hydroxy- and non-hydroxy fatty acid-containing ceramides and diglycerides. This chain is 2-hydroxyacylsphingosine 1-beta-galactosyltransferase, found in Homo sapiens (Human).